A 366-amino-acid polypeptide reads, in one-letter code: NADH-quinone oxidoreductase subunit D (366 aa).

This sequence belongs to the complex I 49 kDa subunit family. NDH-1 is composed of 14 different subunits. Subunits NuoB, C, D, E, F, and G constitute the peripheral sector of the complex.

The protein resides in the cell membrane. It catalyses the reaction a quinone + NADH + 5 H(+)(in) = a quinol + NAD(+) + 4 H(+)(out). Functionally, NDH-1 shuttles electrons from NADH, via FMN and iron-sulfur (Fe-S) centers, to quinones in the respiratory chain. The immediate electron acceptor for the enzyme in this species is believed to be a menaquinone. Couples the redox reaction to proton translocation (for every two electrons transferred, four hydrogen ions are translocated across the cytoplasmic membrane), and thus conserves the redox energy in a proton gradient. In Geobacillus thermodenitrificans (strain NG80-2), this protein is NADH-quinone oxidoreductase subunit D.